Consider the following 262-residue polypeptide: 3-methyl-2-oxobutanoate hydroxymethyltransferase (262 aa).

Mg(2+)-binding residues include aspartate 44 and aspartate 83. 3-methyl-2-oxobutanoate-binding positions include 44–45, aspartate 83, and lysine 112; that span reads DS. Glutamate 114 contributes to the Mg(2+) binding site. Glutamate 181 functions as the Proton acceptor in the catalytic mechanism.

The protein belongs to the PanB family. As to quaternary structure, homodecamer; pentamer of dimers. The cofactor is Mg(2+).

The protein resides in the cytoplasm. The catalysed reaction is 3-methyl-2-oxobutanoate + (6R)-5,10-methylene-5,6,7,8-tetrahydrofolate + H2O = 2-dehydropantoate + (6S)-5,6,7,8-tetrahydrofolate. Its pathway is cofactor biosynthesis; (R)-pantothenate biosynthesis; (R)-pantoate from 3-methyl-2-oxobutanoate: step 1/2. Functionally, catalyzes the reversible reaction in which hydroxymethyl group from 5,10-methylenetetrahydrofolate is transferred onto alpha-ketoisovalerate to form ketopantoate. In Thiobacillus denitrificans (strain ATCC 25259 / T1), this protein is 3-methyl-2-oxobutanoate hydroxymethyltransferase.